The sequence spans 131 residues: MSWQAYVDDHLMCEIEGNHLSAAAIIGHDGVVWAQSATFPQVKPEEITGIMNDFNEPGSLAPTGLYLGGTKYMVIQGEPGAVIRGKKGPGGVTIKKTTMALIIGIYDEPMAPGQCNMIVERLGDYLLEQGF.

This sequence belongs to the profilin family. Occurs in many kinds of cells as a complex with monomeric actin in a 1:1 ratio.

The protein resides in the cytoplasm. Its subcellular location is the cytoskeleton. In terms of biological role, binds to actin and affects the structure of the cytoskeleton. At high concentrations, profilin prevents the polymerization of actin, whereas it enhances it at low concentrations. By binding to PIP2, it inhibits the formation of IP3 and DG. The protein is Profilin-2 of Ambrosia artemisiifolia (Common ragweed).